Reading from the N-terminus, the 102-residue chain is MAKGQSLQDPFLNALRRERVPVSIYLVNGIKLQGQIESFDQFVILLKNTVSQMVYKHAISTVVPSRPVSHHSNNTGGGSNNYHHGSSPAPSSQPQQDSADAE.

Residues 9–68 (DPFLNALRRERVPVSIYLVNGIKLQGQIESFDQFVILLKNTVSQMVYKHAISTVVPSRPV) enclose the Sm domain. The tract at residues 63–102 (VPSRPVSHHSNNTGGGSNNYHHGSSPAPSSQPQQDSADAE) is disordered. Positions 70 to 102 (HHSNNTGGGSNNYHHGSSPAPSSQPQQDSADAE) are enriched in low complexity.

It belongs to the Hfq family. Homohexamer.

Its function is as follows. RNA chaperone that binds small regulatory RNA (sRNAs) and mRNAs to facilitate mRNA translational regulation in response to envelope stress, environmental stress and changes in metabolite concentrations. Also binds with high specificity to tRNAs. This chain is RNA-binding protein Hfq, found in Erwinia tasmaniensis (strain DSM 17950 / CFBP 7177 / CIP 109463 / NCPPB 4357 / Et1/99).